A 65-amino-acid chain; its full sequence is Small ribosomal subunit protein eS27 (65 aa).

Zn(2+) contacts are provided by C20, C23, C39, and C42. Residues 20-42 (CIDCGNEQIVFSHPATKVRCLVC) form a C4-type zinc finger.

It belongs to the eukaryotic ribosomal protein eS27 family. Part of the 30S ribosomal subunit. It depends on Zn(2+) as a cofactor.

The chain is Small ribosomal subunit protein eS27 from Thermococcus gammatolerans (strain DSM 15229 / JCM 11827 / EJ3).